The chain runs to 1007 residues: Probable beta-galactosidase A (1007 aa).

The signal sequence occupies residues 1–18; sequence MRLLPVWTAALLAAQAAG. Substrate-binding residues include Tyr96, Asn140, Ala141, and Glu142. Asn156 carries an N-linked (GlcNAc...) asparagine glycan. Residue Asn199 coordinates substrate. Glu200 serves as the catalytic Proton donor. Cys205 and Cys206 form a disulfide bridge. Substrate is bound at residue Tyr260. Cys266 and Cys315 are disulfide-bonded. Glu298 (nucleophile) is an active-site residue. Tyr364 contributes to the substrate binding site. Residues Asn405, Asn422, Asn621, Asn740, Asn775, and Asn914 are each glycosylated (N-linked (GlcNAc...) asparagine).

It belongs to the glycosyl hydrolase 35 family.

It is found in the secreted. The enzyme catalyses Hydrolysis of terminal non-reducing beta-D-galactose residues in beta-D-galactosides.. Functionally, cleaves beta-linked terminal galactosyl residues from gangliosides, glycoproteins, and glycosaminoglycans. In Emericella nidulans (strain FGSC A4 / ATCC 38163 / CBS 112.46 / NRRL 194 / M139) (Aspergillus nidulans), this protein is Probable beta-galactosidase A (lacA).